A 476-amino-acid chain; its full sequence is MDKNLMMPKRSRIDVKGNFANGPLQARPLVALLDGRDCSIEMPILKDVATVAFCDAQSTSEIHEKVLNEAVGALMWHTIILTKEDLEKFKALRIIVRIGSGTDNIDVKAAGELGIAVCNVPGYGVEEVADTTMCLILNLYRRTYWLANMVREGKKFTGPEQVREAAHGCARIRGDTLGLVGLGRIGSAVALRAKAFGFNVIFYDPYLPDGIDKSLGLTRVYTLQDLLFQSDCVSLHCTLNEHNHHLINEFTIKQMRPGAFLVNTARGGLVDDETLALALKQGRIRAAALDVHENEPYNVFQGALKDAPNLICTPHAAFFSDASATELREMAATEIRRAIVGNIPDVLRNCVNKEYFMRTPPAAAAGGVAAAVYPEGALHHRAHSTTPHDGPHSTTNLGSTVGGGPTTVAQAAAAAVAAAAAAALLPSPVPSHLSPQVGGLPLGIVSSQSPLSAPDPNNHLSSSIKTEVKAESTEAP.

NAD(+) is bound by residues Ser-100, 180–185 (VGLGRI), Asp-204, 237–243 (CTLNEHN), 264–266 (TAR), and Asp-290. Arg-266 is an active-site residue. Glu-295 is an active-site residue. Residue His-315 is the Proton donor of the active site. Position 315–318 (315–318 (HAAF)) interacts with NAD(+). Residues 445–476 (VSSQSPLSAPDPNNHLSSSIKTEVKAESTEAP) are disordered. Over residues 466–476 (TEVKAESTEAP) the composition is skewed to basic and acidic residues.

The protein belongs to the D-isomer specific 2-hydroxyacid dehydrogenase family. As to quaternary structure, homodimer. Interacts with hairy (hry), knirps (kni), snail (sna), and Enhancer of split m-delta (HLHm-delta). Complex may be involved in transcriptional repression. Also interacts with adenovirus E1A protein.

The protein localises to the nucleus. Its function is as follows. Corepressor targeting diverse transcription regulators. Hairy-interacting protein required for embryonic segmentation and hairy-mediated transcriptional repression. The sequence is that of C-terminal-binding protein (CtBP) from Drosophila melanogaster (Fruit fly).